The primary structure comprises 726 residues: Eukaryotic translation initiation factor 3 subunit B (726 aa).

The tract at residues 1-94 (MSAALEDIKL…LFVECASPAD (94 aa)) is sufficient for interaction with HCR1 and TIF32. The segment at 1–219 (MSAALEDIKL…GVVMWGGPHF (219 aa)) is sufficient for interaction with PIC8. One can recognise an RRM domain in the interval 37–120 (QYIVVCGAPV…HRLFIYTMRD (84 aa)). WD repeat units lie at residues 142–182 (FPTS…EESV), 186–224 (RKNW…RLRR), 235–283 (VSPS…LQST), 331–374 (LKVP…MSCK), 442–485 (ELKD…FAPE), 505–549 (ITDK…TDKN), and 566–611 (NSFP…VKEE).

Belongs to the eIF-3 subunit B family. Component of the eukaryotic translation initiation factor 3 (eIF-3) complex.

Its subcellular location is the cytoplasm. Its function is as follows. RNA-binding component of the eukaryotic translation initiation factor 3 (eIF-3) complex, which is involved in protein synthesis of a specialized repertoire of mRNAs and, together with other initiation factors, stimulates binding of mRNA and methionyl-tRNAi to the 40S ribosome. The eIF-3 complex specifically targets and initiates translation of a subset of mRNAs involved in cell proliferation. This Vanderwaltozyma polyspora (strain ATCC 22028 / DSM 70294 / BCRC 21397 / CBS 2163 / NBRC 10782 / NRRL Y-8283 / UCD 57-17) (Kluyveromyces polysporus) protein is Eukaryotic translation initiation factor 3 subunit B.